Reading from the N-terminus, the 166-residue chain is Large ribosomal subunit protein uL10 (166 aa).

The protein belongs to the universal ribosomal protein uL10 family. In terms of assembly, part of the ribosomal stalk of the 50S ribosomal subunit. The N-terminus interacts with L11 and the large rRNA to form the base of the stalk. The C-terminus forms an elongated spine to which L12 dimers bind in a sequential fashion forming a multimeric L10(L12)X complex.

In terms of biological role, forms part of the ribosomal stalk, playing a central role in the interaction of the ribosome with GTP-bound translation factors. The sequence is that of Large ribosomal subunit protein uL10 from Ectopseudomonas mendocina (strain ymp) (Pseudomonas mendocina).